The primary structure comprises 359 residues: Outer membrane protein P2 (359 aa).

The first 20 residues, M1–A20, serve as a signal peptide directing secretion.

This sequence belongs to the Gram-negative porin family. Homotrimer.

The protein localises to the cell outer membrane. Its function is as follows. Forms pores that allow passive diffusion of small molecules across the outer membrane. The sequence is that of Outer membrane protein P2 (ompP2) from Haemophilus influenzae (strain ATCC 51907 / DSM 11121 / KW20 / Rd).